A 419-amino-acid polypeptide reads, in one-letter code: MPCILYMDDTSCLIDLPTSLQFNKHILPTRTKPVVKPYLLPEKSTSDYENSGKGTVGQVLQSLQRVRRALQLRSLDDNQSTDKSHHVQFQDIVYRSNTSASEIHFQAENAPLVQWYSDIFKVLVKAPVIQFEDQCLQWLKMLNTIPPSYSFITIKSKDTVELGLEEIYQQCVQNDGASAIKLKLKGSKVITESSETNCRDSIYYIPARSSFIMGDVEKTAQILLEAIDGHLEKPKCIIIDPPWPNKSVARSSVYKVNRNLGYLKALPIQESLSKTGVVAVWCTNKEKYVNFVKKVLFKKWNLTLVSTWTWLKITAFGEPLFDVYSNMRKPWEQLLIGVTSEYTSVYSDKIPPTFTIIGIPDYHSRKPSLKPFISRWFNCSANESLPVLEIFGRSLTPNWITWGREPLLFMHELYWSSDN.

This sequence belongs to the MT-A70-like family.

It is found in the cytoplasm. This is an uncharacterized protein from Schizosaccharomyces pombe (strain 972 / ATCC 24843) (Fission yeast).